We begin with the raw amino-acid sequence, 631 residues long: ATP-dependent RNA helicase mrh4, mitochondrial (631 aa).

The N-terminal 45 residues, 1–45, are a transit peptide targeting the mitochondrion; the sequence is MNRLGRLPLPLPPSVCLFCRFRATASLPSSLQATRSMATARLRRR. The segment at 68 to 112 is disordered; that stretch reads KERFGPFAGMNQTEARIRETPRARSRAAQKRSGEPEEDSQKESPL. Residues 98-108 are compositionally biased toward basic and acidic residues; the sequence is RSGEPEEDSQK. The Q motif signature appears at 141 to 174; it reads TSFDQFQLLPVVRNSISSQALPGLVDVTPTPIQR. The segment covering 180 to 193 has biased composition (basic and acidic residues); that stretch reads LLEEPKTEKKPTKA. A disordered region spans residues 180 to 199; the sequence is LLEEPKTEKKPTKADDDEPR. The 213-residue stretch at 194-406 folds into the Helicase ATP-binding domain; the sequence is DDDEPRYDQY…RKRYPDIKRL (213 aa). 207–214 contacts ATP; that stretch reads AETGSGKT. The segment at 229–249 is disordered; it reads EARDKELEKKEQEEKAREREE. The DEAD box motif lies at 353–356; sequence DEAD. One can recognise a Helicase C-terminal domain in the interval 455–631; sequence GPYASYVAPK…EGMFRGQALI (177 aa).

The protein belongs to the DEAD box helicase family. MRH4 subfamily.

The protein resides in the mitochondrion. It carries out the reaction ATP + H2O = ADP + phosphate + H(+). In terms of biological role, ATP-binding RNA helicase involved in mitochondrial RNA metabolism. Required for maintenance of mitochondrial DNA. This chain is ATP-dependent RNA helicase mrh4, mitochondrial (mrh4), found in Aspergillus fumigatus (strain ATCC MYA-4609 / CBS 101355 / FGSC A1100 / Af293) (Neosartorya fumigata).